The following is a 142-amino-acid chain: Large ribosomal subunit protein uL13 (142 aa).

It belongs to the universal ribosomal protein uL13 family. In terms of assembly, part of the 50S ribosomal subunit.

This protein is one of the early assembly proteins of the 50S ribosomal subunit, although it is not seen to bind rRNA by itself. It is important during the early stages of 50S assembly. The protein is Large ribosomal subunit protein uL13 of Photorhabdus laumondii subsp. laumondii (strain DSM 15139 / CIP 105565 / TT01) (Photorhabdus luminescens subsp. laumondii).